The chain runs to 385 residues: Ethanolamine kinase 2 (385 aa).

This sequence belongs to the choline/ethanolamine kinase family.

It catalyses the reaction ethanolamine + ATP = phosphoethanolamine + ADP + H(+). It participates in phospholipid metabolism; phosphatidylethanolamine biosynthesis; phosphatidylethanolamine from ethanolamine: step 1/3. Highly specific for ethanolamine phosphorylation. Does not have choline kinase activity. The chain is Ethanolamine kinase 2 (Etnk2) from Rattus norvegicus (Rat).